A 100-amino-acid chain; its full sequence is MEINIIEEKENPLLNRKEIRFECLYEGESTPKVLEVKNKLVAMLDADKDLLVVDKIDQGFGEPRATGYAKIYESAEKLTEIEPEHVIKKNTEASEEEEEE.

Belongs to the eukaryotic ribosomal protein eS24 family.

This is Small ribosomal subunit protein eS24 from Methanothermobacter thermautotrophicus (strain ATCC 29096 / DSM 1053 / JCM 10044 / NBRC 100330 / Delta H) (Methanobacterium thermoautotrophicum).